The primary structure comprises 484 residues: Glutamate--tRNA ligase (484 aa).

A 'HIGH' region motif is present at residues 11-21; the sequence is PSPTGLLHIGN. Residues 255-259 carry the 'KMSKS' region motif; that stretch reads KLSKR. Lysine 258 serves as a coordination point for ATP.

Belongs to the class-I aminoacyl-tRNA synthetase family. Glutamate--tRNA ligase type 1 subfamily. As to quaternary structure, monomer.

The protein localises to the cytoplasm. The catalysed reaction is tRNA(Glu) + L-glutamate + ATP = L-glutamyl-tRNA(Glu) + AMP + diphosphate. In terms of biological role, catalyzes the attachment of glutamate to tRNA(Glu) in a two-step reaction: glutamate is first activated by ATP to form Glu-AMP and then transferred to the acceptor end of tRNA(Glu). The sequence is that of Glutamate--tRNA ligase from Streptococcus thermophilus (strain CNRZ 1066).